Reading from the N-terminus, the 509-residue chain is Proto-oncogene tyrosine-protein kinase LCK (509 aa).

G2 carries the N-myristoyl glycine lipid modification. The interactions with CD4 and CD8 stretch occupies residues 2–72 (GCVCSSNPED…DNLVIALHSY (71 aa)). S-palmitoyl cysteine attachment occurs at residues C3 and C5. One can recognise an SH3 domain in the interval 61 to 121 (LQDNLVIALH…PFNFVAKANS (61 aa)). K99 participates in a covalent cross-link: Glycyl lysine isopeptide (Lys-Gly) (interchain with G-Cter in ubiquitin). At S102 the chain carries Phosphoserine. The SH2 domain occupies 127-224 (WFFKNLSRKD…GLCTKLSRPC (98 aa)). The interval 154–242 (RESESTAGSF…WWEDEWEVPR (89 aa)) is interaction with PTPRH. Position 159 is a phosphothreonine (T159). A Phosphoserine modification is found at S162. Residue Y192 is modified to Phosphotyrosine. The residue at position 194 (S194) is a Phosphoserine. The Protein kinase domain occupies 245 to 498 (LKLVERLGAG…YLRSVLDDFF (254 aa)). ATP-binding positions include 251–259 (LGAGQFGEV) and K273. Residue K276 forms a Glycyl lysine isopeptide (Lys-Gly) (interchain with G-Cter in ubiquitin) linkage. The active-site Proton acceptor is the D364. Y394 is subject to Phosphotyrosine; by autocatalysis. Y505 bears the Phosphotyrosine mark.

It belongs to the protein kinase superfamily. Tyr protein kinase family. SRC subfamily. Binds to the cytoplasmic domain of cell surface receptors, such as AXL, CD2, CD4, CD5, CD8, CD44, CD45 and CD122. Also binds to effector molecules, such as PI4K, VAV1, RASA1, FYB1 and to other protein kinases including CDK1, RAF1, ZAP70 and SYK. Binds to phosphatidylinositol 3'-kinase (PI3K) from T-lymphocytes through its SH3 domain and to the tyrosine phosphorylated form of KHDRBS1/p70 through its SH2 domain. Interacts with SQSTM1. Interacts with phosphorylated LIME1. Interacts with CBLB and PTPRH. Interacts with RUNX3. Forms a signaling complex with EPHA1, PTK2B and PI3-KINASE; upon activation by EFNA1 which may regulate T-lymphocytes migration. Associates with ZAP70 and RHOH; these interactions allow LCK-mediated RHOH and CD3 subunit phosphorylations in presence of a functional ZAP70. Interacts with CEACAM1 (via cytoplasmic domain); mediates CEACAM1 phosphorylation resulting in PTPN6 recruitment that dephosphorylates TCR stimulation-induced CD247 and ZAP70. Interacts with FYB2. Interacts with CD160. Interacts with CD48. Post-translationally, autophosphorylated on Tyr-394, increasing enzymatic activity, this site is dephosphorylated by PTN22. Phosphorylated on Tyr-505 by CSK, decreasing activity. Dephosphorylated by PTPRC/CD45. Dephosphorylation at Tyr-394 by PTPN2 negatively regulates T-cells differentiation. Dephosphorylation at Tyr-394 by DUSP22 negatively regulates T-cell receptor signaling. Myristoylation is required prior to palmitoylation. In terms of processing, palmitoylation regulates association with the plasma membrane and could be mediated by ZDHHC2. Post-translationally, 'Lys-63'-linked ubiquitinated at Lys-99 and Lys-276 by UBR2; this modification is required for autophosphorylation at Tyr-394.

The protein resides in the cell membrane. It is found in the cytoplasm. It localises to the cytosol. It carries out the reaction L-tyrosyl-[protein] + ATP = O-phospho-L-tyrosyl-[protein] + ADP + H(+). The relative activities of the inhibitory tyrosine-protein kinase CSK and the activating tyrosine-protein phosphatase PTPRC/CD45 determine the level of LCK activity. These interactions allow rapid and efficient activation of LCK in response to TCR stimulation. Functionally, non-receptor tyrosine-protein kinase that plays an essential role in the selection and maturation of developing T-cells in the thymus and in the function of mature T-cells. Plays a key role in T-cell antigen receptor (TCR)-linked signal transduction pathways. Constitutively associated with the cytoplasmic portions of the CD4 and CD8 surface receptors. Association of the TCR with a peptide antigen-bound MHC complex facilitates the interaction of CD4 and CD8 with MHC class II and class I molecules, respectively, thereby recruiting the associated LCK protein to the vicinity of the TCR/CD3 complex. LCK then phosphorylates tyrosine residues within the immunoreceptor tyrosine-based activation motifs (ITAM) of the cytoplasmic tails of the TCR-gamma chains and CD3 subunits, initiating the TCR/CD3 signaling pathway. Once stimulated, the TCR recruits the tyrosine kinase ZAP70, that becomes phosphorylated and activated by LCK. Following this, a large number of signaling molecules are recruited, ultimately leading to lymphokine production. LCK also contributes to signaling by other receptor molecules. Associates directly with the cytoplasmic tail of CD2, which leads to hyperphosphorylation and activation of LCK. Also plays a role in the IL2 receptor-linked signaling pathway that controls the T-cell proliferative response. Binding of IL2 to its receptor results in increased activity of LCK. Is expressed at all stages of thymocyte development and is required for the regulation of maturation events that are governed by both pre-TCR and mature alpha beta TCR. Phosphorylates other substrates including RUNX3, PTK2B/PYK2, the microtubule-associated protein MAPT, RHOH or TYROBP. Interacts with UNC119; this interaction plays a crucial role in activation of LCK. This Rattus norvegicus (Rat) protein is Proto-oncogene tyrosine-protein kinase LCK (Lck).